A 333-amino-acid polypeptide reads, in one-letter code: tRNA-dihydrouridine(16) synthase (333 aa).

Residues 19–21 (PMQ) and glutamine 80 each bind FMN. The active-site Proton donor is the cysteine 110. FMN-binding positions include lysine 151, 211 to 213 (NGD), and 235 to 236 (GR).

Belongs to the Dus family. DusC subfamily. FMN is required as a cofactor.

The enzyme catalyses 5,6-dihydrouridine(16) in tRNA + NADP(+) = uridine(16) in tRNA + NADPH + H(+). It carries out the reaction 5,6-dihydrouridine(16) in tRNA + NAD(+) = uridine(16) in tRNA + NADH + H(+). Its function is as follows. Catalyzes the synthesis of 5,6-dihydrouridine (D), a modified base found in the D-loop of most tRNAs, via the reduction of the C5-C6 double bond in target uridines. Specifically modifies U16 in tRNAs. The polypeptide is tRNA-dihydrouridine(16) synthase (Neisseria meningitidis serogroup A / serotype 4A (strain DSM 15465 / Z2491)).